Here is a 425-residue protein sequence, read N- to C-terminus: Protein CLP1 homolog (425 aa).

ATP contacts are provided by residues glutamate 18, lysine 59, and 121 to 126 (DVGKST).

The protein belongs to the Clp1 family. Clp1 subfamily.

It localises to the nucleus. Its function is as follows. Required for endonucleolytic cleavage during polyadenylation-dependent pre-mRNA 3'-end formation. The polypeptide is Protein CLP1 homolog (cbc) (Drosophila ananassae (Fruit fly)).